The sequence spans 196 residues: NADH-quinone oxidoreductase subunit B (196 aa).

Positions 63, 64, 129, and 159 each coordinate [4Fe-4S] cluster.

This sequence belongs to the complex I 20 kDa subunit family. In terms of assembly, NDH-1 is composed of 14 different subunits. Subunits NuoB, C, D, E, F, and G constitute the peripheral sector of the complex. The cofactor is [4Fe-4S] cluster.

Its subcellular location is the cell inner membrane. It catalyses the reaction a quinone + NADH + 5 H(+)(in) = a quinol + NAD(+) + 4 H(+)(out). Its function is as follows. NDH-1 shuttles electrons from NADH, via FMN and iron-sulfur (Fe-S) centers, to quinones in the respiratory chain. The immediate electron acceptor for the enzyme in this species is believed to be a menaquinone. Couples the redox reaction to proton translocation (for every two electrons transferred, four hydrogen ions are translocated across the cytoplasmic membrane), and thus conserves the redox energy in a proton gradient. The sequence is that of NADH-quinone oxidoreductase subunit B from Bacteroides fragilis (strain ATCC 25285 / DSM 2151 / CCUG 4856 / JCM 11019 / LMG 10263 / NCTC 9343 / Onslow / VPI 2553 / EN-2).